A 763-amino-acid chain; its full sequence is Phosphoglycerol transferase I (763 aa).

4 helical membrane-spanning segments follow: residues 1–21 (MSEL…AWKA), 26–46 (WWFA…ITLF), 77–97 (ILPG…LGWI), and 108–128 (FGYS…SPAF).

This sequence belongs to the OpgB family.

The protein localises to the cell inner membrane. It carries out the reaction a phosphatidylglycerol + a membrane-derived-oligosaccharide D-glucose = a 1,2-diacyl-sn-glycerol + a membrane-derived-oligosaccharide 6-(glycerophospho)-D-glucose.. It functions in the pathway glycan metabolism; osmoregulated periplasmic glucan (OPG) biosynthesis. Its function is as follows. Transfers a phosphoglycerol residue from phosphatidylglycerol to the membrane-bound nascent glucan backbones. The sequence is that of Phosphoglycerol transferase I from Escherichia coli O17:K52:H18 (strain UMN026 / ExPEC).